The sequence spans 226 residues: Glutathione S-transferase kappa 1 (226 aa).

16–18 (SPY) is a binding site for glutathione. Lys-49 is subject to N6-succinyllysine. Asn-53 lines the glutathione pocket. Residues Lys-71 and Lys-85 each carry the N6-acetyllysine modification. Lys-116 carries the N6-acetyllysine; alternate modification. Lys-116 carries the N6-succinyllysine; alternate modification. The residue at position 144 (Lys-144) is an N6-succinyllysine. Lys-158 carries the post-translational modification N6-acetyllysine; alternate. An N6-succinyllysine; alternate modification is found at Lys-158. N6-acetyllysine is present on residues Lys-165 and Lys-169. Glutathione-binding positions include Leu-183 and 200–201 (SD).

It belongs to the GST superfamily. Kappa family. As to quaternary structure, homodimer. Ubiquitous.

The protein resides in the peroxisome. The catalysed reaction is RX + glutathione = an S-substituted glutathione + a halide anion + H(+). In terms of biological role, glutathione S-transferase that catalyzes the conjugation of glutathione to exogenous and endogenous compounds. Significant glutathione conjugating activity is found only with the model substrate, 1-chloro-2,4-dinitrobenzene (CDNB). The sequence is that of Glutathione S-transferase kappa 1 (GSTK1) from Homo sapiens (Human).